A 637-amino-acid chain; its full sequence is ATP-dependent zinc metalloprotease FtsH (637 aa).

Over 1–6 (MNNQGR) the chain is Cytoplasmic. Residues 7–27 (SILAWAALFIFVILLFNVFQS) form a helical membrane-spanning segment. Residues 28 to 103 (DGLLGVRNNI…VVPLETRMNT (76 aa)) lie on the Periplasmic side of the membrane. A helical transmembrane segment spans residues 104–124 (FLGFLISWFPMLLLIGVWVFF). Over 125–637 (MRQMHGGGKA…TKAQKENIAS (513 aa)) the chain is Cytoplasmic. 195–202 (GPPGTGKT) is a binding site for ATP. Position 417 (His-417) interacts with Zn(2+). Residue Glu-418 is part of the active site. 2 residues coordinate Zn(2+): His-421 and Asp-495. The segment at 617-637 (DKEKLHEKTKTTKAQKENIAS) is disordered.

The protein in the central section; belongs to the AAA ATPase family. It in the C-terminal section; belongs to the peptidase M41 family. Homohexamer. Requires Zn(2+) as cofactor.

It is found in the cell inner membrane. Its function is as follows. Acts as a processive, ATP-dependent zinc metallopeptidase for both cytoplasmic and membrane proteins. Plays a role in the quality control of integral membrane proteins. The chain is ATP-dependent zinc metalloprotease FtsH from Rickettsia typhi (strain ATCC VR-144 / Wilmington).